Consider the following 574-residue polypeptide: uncharacterized protein (574 aa).

Residues 297–317 are disordered; that stretch reads SAASKPRKRKKDEVSGAQVNS.

This is an uncharacterized protein from Mus musculus (Mouse).